We begin with the raw amino-acid sequence, 616 residues long: uncharacterized protein (616 aa).

It belongs to the UbiD family.

This is an uncharacterized protein from Helicobacter pylori (strain J99 / ATCC 700824) (Campylobacter pylori J99).